Consider the following 199-residue polypeptide: Probable GTP-binding protein EngB (199 aa).

An EngB-type G domain is found at 28–199; it reads DLPEIALAGR…DSWDAILEQV (172 aa). GTP contacts are provided by residues 36–43, 63–67, 81–84, 148–151, and 180–182; these read GRSNVGKS, GKTQL, DVPG, TKAD, and FSS. The Mg(2+) site is built by Ser-43 and Thr-65.

Belongs to the TRAFAC class TrmE-Era-EngA-EngB-Septin-like GTPase superfamily. EngB GTPase family. Requires Mg(2+) as cofactor.

Functionally, necessary for normal cell division and for the maintenance of normal septation. The protein is Probable GTP-binding protein EngB of Streptococcus pyogenes serotype M3 (strain SSI-1).